The following is a 311-amino-acid chain: Olfactory receptor 1L4 (311 aa).

The Extracellular segment spans residues 1–26; that stretch reads METKNYSSSTSGFILLGLSSNPKLQK. A glycan (N-linked (GlcNAc...) asparagine) is linked at Asn-5. The helical transmembrane segment at 27–50 threads the bilayer; sequence PLFAIFLIMYLLTAVGNVLIILAI. Residues 51–58 lie on the Cytoplasmic side of the membrane; that stretch reads YSDPRLHT. A helical membrane pass occupies residues 59–80; that stretch reads PMYFFLSNLSFMDICFTTVIVP. The Extracellular segment spans residues 81-101; sequence KMLVNFLSETKIISYVGCLIQ. Cys-98 and Cys-190 are joined by a disulfide. The chain crosses the membrane as a helical span at residues 102 to 121; that stretch reads MYFFMAFGNTDSYLLASMAI. The Cytoplasmic portion of the chain corresponds to 122–140; sequence DRLVAICNPLHYDVVMKPW. The helical transmembrane segment at 141–159 threads the bilayer; sequence HCLLMLLGSCSISHLHSLF. Topologically, residues 160–197 are extracellular; the sequence is RVLLMSRLSFCASHIIKHFFCDTQPVLKLSCSDTSSSQ. The chain crosses the membrane as a helical span at residues 198 to 220; the sequence is MVVMTETLAVIVTPFLCTIFSYL. The Cytoplasmic portion of the chain corresponds to 221-237; sequence QIIVTVLRIPSAAGKWK. A helical transmembrane segment spans residues 238–260; sequence AFSTCGSHLTVVVLFYGSVIYVY. Residues 261-273 are Extracellular-facing; it reads FRPLSMYSVMKGR. A helical membrane pass occupies residues 274 to 293; that stretch reads VATVMYTVVTPMLNPFIYSL. The Cytoplasmic segment spans residues 294-311; sequence RNKDMKRGLKKLRHRIYS.

It belongs to the G-protein coupled receptor 1 family.

The protein resides in the cell membrane. Odorant receptor. In Homo sapiens (Human), this protein is Olfactory receptor 1L4 (OR1L4).